The primary structure comprises 876 residues: Leucine--tRNA ligase (876 aa).

The 'HIGH' region signature appears at 43 to 53 (PYPSGRIHMGH). The short motif at 632-636 (KMSKS) is the 'KMSKS' region element. Lys635 contacts ATP.

This sequence belongs to the class-I aminoacyl-tRNA synthetase family.

The protein localises to the cytoplasm. The catalysed reaction is tRNA(Leu) + L-leucine + ATP = L-leucyl-tRNA(Leu) + AMP + diphosphate. The polypeptide is Leucine--tRNA ligase (Rhodopseudomonas palustris (strain ATCC BAA-98 / CGA009)).